A 1353-amino-acid polypeptide reads, in one-letter code: Xanthine dehydrogenase (1353 aa).

The 88-residue stretch at 17-104 (STLIFFVNGK…GSAVTTVEGI (88 aa)) folds into the 2Fe-2S ferredoxin-type domain. Residues Cys56, Cys61, Cys64, Cys86, Cys126, Cys129, Cys161, and Cys163 each contribute to the [2Fe-2S] cluster site. The FAD-binding PCMH-type domain occupies 245-434 (YKGERATWYR…VGLYFPKTLE (190 aa)). Residues 273-280 (LVVGNTEI), Phe353, 363-367 (SLGGN), Asp376, Leu424, and Lys442 each bind FAD. Positions 790 and 821 each coordinate Mo-molybdopterin. 2 residues coordinate substrate: Glu825 and Arg903. Arg935 lines the Mo-molybdopterin pocket. A substrate-binding site is contributed by Phe937. Ala1102 lines the Mo-molybdopterin pocket. Catalysis depends on Glu1285, which acts as the Proton acceptor.

Belongs to the xanthine dehydrogenase family. Homodimer. FAD serves as cofactor. The cofactor is Mo-molybdopterin. Requires [2Fe-2S] cluster as cofactor.

The protein localises to the peroxisome. It carries out the reaction xanthine + NAD(+) + H2O = urate + NADH + H(+). The catalysed reaction is hypoxanthine + NAD(+) + H2O = xanthine + NADH + H(+). In terms of biological role, key enzyme in purine degradation. Catalyzes the oxidation of hypoxanthine to xanthine. Catalyzes the oxidation of xanthine to uric acid. This chain is Xanthine dehydrogenase (XDH), found in Calliphora vicina (Blue blowfly).